Consider the following 221-residue polypeptide: ATP-dependent dethiobiotin synthetase BioD (221 aa).

ATP is bound at residue 11 to 16 (GVGKTY). Threonine 15 lines the Mg(2+) pocket. The active site involves lysine 36. Threonine 40 contacts substrate. Residues aspartate 48 and 107–110 (EGAG) contribute to the ATP site. Mg(2+)-binding residues include aspartate 48 and glutamate 107.

This sequence belongs to the dethiobiotin synthetase family. Homodimer. Requires Mg(2+) as cofactor.

It is found in the cytoplasm. It carries out the reaction (7R,8S)-7,8-diammoniononanoate + CO2 + ATP = (4R,5S)-dethiobiotin + ADP + phosphate + 3 H(+). It functions in the pathway cofactor biosynthesis; biotin biosynthesis; biotin from 7,8-diaminononanoate: step 1/2. Functionally, catalyzes a mechanistically unusual reaction, the ATP-dependent insertion of CO2 between the N7 and N8 nitrogen atoms of 7,8-diaminopelargonic acid (DAPA, also called 7,8-diammoniononanoate) to form a ureido ring. The chain is ATP-dependent dethiobiotin synthetase BioD from Hydrogenobaculum sp. (strain Y04AAS1).